Here is a 591-residue protein sequence, read N- to C-terminus: L-fucose isomerase (591 aa).

Catalysis depends on proton acceptor residues Glu337 and Asp361. Residues Glu337, Asp361, and His528 each coordinate Mn(2+).

It belongs to the L-fucose isomerase family. Homohexamer. Requires Mn(2+) as cofactor.

Its subcellular location is the cytoplasm. It catalyses the reaction L-fucose = L-fuculose. The protein operates within carbohydrate degradation; L-fucose degradation; L-lactaldehyde and glycerone phosphate from L-fucose: step 1/3. Its function is as follows. Converts the aldose L-fucose into the corresponding ketose L-fuculose. In Klebsiella pneumoniae (strain 342), this protein is L-fucose isomerase.